Consider the following 472-residue polypeptide: Adenosylhomocysteinase (472 aa).

The substrate site is built by T61, D136, and E196. Position 197 to 199 (197 to 199 (TTT)) interacts with NAD(+). Residues K226 and D230 each contribute to the substrate site. Residues N231, 260–265 (GYGDVG), E283, N318, 339–341 (IGH), and N384 each bind NAD(+).

It belongs to the adenosylhomocysteinase family. It depends on NAD(+) as a cofactor.

It localises to the cytoplasm. The enzyme catalyses S-adenosyl-L-homocysteine + H2O = L-homocysteine + adenosine. It functions in the pathway amino-acid biosynthesis; L-homocysteine biosynthesis; L-homocysteine from S-adenosyl-L-homocysteine: step 1/1. In terms of biological role, may play a key role in the regulation of the intracellular concentration of adenosylhomocysteine. The sequence is that of Adenosylhomocysteinase from Cupriavidus pinatubonensis (strain JMP 134 / LMG 1197) (Cupriavidus necator (strain JMP 134)).